Reading from the N-terminus, the 173-residue chain is Crossover junction endodeoxyribonuclease RuvC (173 aa).

Active-site residues include aspartate 8, glutamate 67, and aspartate 139. Mg(2+)-binding residues include aspartate 8, glutamate 67, and aspartate 139.

It belongs to the RuvC family. In terms of assembly, homodimer which binds Holliday junction (HJ) DNA. The HJ becomes 2-fold symmetrical on binding to RuvC with unstacked arms; it has a different conformation from HJ DNA in complex with RuvA. In the full resolvosome a probable DNA-RuvA(4)-RuvB(12)-RuvC(2) complex forms which resolves the HJ. It depends on Mg(2+) as a cofactor.

The protein resides in the cytoplasm. The enzyme catalyses Endonucleolytic cleavage at a junction such as a reciprocal single-stranded crossover between two homologous DNA duplexes (Holliday junction).. In terms of biological role, the RuvA-RuvB-RuvC complex processes Holliday junction (HJ) DNA during genetic recombination and DNA repair. Endonuclease that resolves HJ intermediates. Cleaves cruciform DNA by making single-stranded nicks across the HJ at symmetrical positions within the homologous arms, yielding a 5'-phosphate and a 3'-hydroxyl group; requires a central core of homology in the junction. The consensus cleavage sequence is 5'-(A/T)TT(C/G)-3'. Cleavage occurs on the 3'-side of the TT dinucleotide at the point of strand exchange. HJ branch migration catalyzed by RuvA-RuvB allows RuvC to scan DNA until it finds its consensus sequence, where it cleaves and resolves the cruciform DNA. The polypeptide is Crossover junction endodeoxyribonuclease RuvC (Tolumonas auensis (strain DSM 9187 / NBRC 110442 / TA 4)).